Reading from the N-terminus, the 514-residue chain is UDP-N-acetylmuramoyl-L-alanyl-D-glutamate--2,6-diaminopimelate ligase (514 aa).

Thr37 is a binding site for UDP-N-acetyl-alpha-D-muramoyl-L-alanyl-D-glutamate. An ATP-binding site is contributed by 125–131 (GTNGKTS). UDP-N-acetyl-alpha-D-muramoyl-L-alanyl-D-glutamate contacts are provided by residues 167-168 (TT), Ser194, Gln200, and Arg202. Lys234 carries the post-translational modification N6-carboxylysine. Meso-2,6-diaminopimelate-binding positions include Arg406, 430-433 (DNPR), Gly481, and Glu485. A Meso-diaminopimelate recognition motif motif is present at residues 430–433 (DNPR).

The protein belongs to the MurCDEF family. MurE subfamily. It depends on Mg(2+) as a cofactor. In terms of processing, carboxylation is probably crucial for Mg(2+) binding and, consequently, for the gamma-phosphate positioning of ATP.

The protein localises to the cytoplasm. The catalysed reaction is UDP-N-acetyl-alpha-D-muramoyl-L-alanyl-D-glutamate + meso-2,6-diaminopimelate + ATP = UDP-N-acetyl-alpha-D-muramoyl-L-alanyl-gamma-D-glutamyl-meso-2,6-diaminopimelate + ADP + phosphate + H(+). Its pathway is cell wall biogenesis; peptidoglycan biosynthesis. Functionally, catalyzes the addition of meso-diaminopimelic acid to the nucleotide precursor UDP-N-acetylmuramoyl-L-alanyl-D-glutamate (UMAG) in the biosynthesis of bacterial cell-wall peptidoglycan. This chain is UDP-N-acetylmuramoyl-L-alanyl-D-glutamate--2,6-diaminopimelate ligase, found in Ralstonia nicotianae (strain ATCC BAA-1114 / GMI1000) (Ralstonia solanacearum).